The chain runs to 289 residues: Rhodopsin (289 aa).

The Extracellular portion of the chain corresponds to 1-7 (YLVSPAA). A helical transmembrane segment spans residues 8-32 (YAALGAYMFLLILIGFPVNFLTLYV). Topologically, residues 33–44 (TLEHKKLRTPLN) are cytoplasmic. Residues 45–67 (YILLNLAVADLFMVLGGFTTTMY) form a helical membrane-spanning segment. Residues 68–81 (TSMHGYFVLGRLGC) lie on the Extracellular side of the membrane. A disulfide bond links cysteine 81 and cysteine 158. A helical membrane pass occupies residues 82-104 (NLEGFFATLGGEIALWSLVVLAI). Positions 105 to 107 (ERW) match the 'Ionic lock' involved in activated form stabilization motif. Topologically, residues 105-123 (ERWIVVCKPISNFRFTEDN) are cytoplasmic. A helical membrane pass occupies residues 124–144 (AIMGLAFSWVMALTCAVPPLV). Residues 145–173 (GWSRYIPEGMQCSCGVDYYTRAEGFNNES) are Extracellular-facing. N-linked (GlcNAc...) asparagine glycosylation occurs at asparagine 171. Residues 174–195 (FVIYMFIVHFPIPLSVIFFCYG) form a helical membrane-spanning segment. The Cytoplasmic segment spans residues 196 to 223 (RLLCAVKEAAAAQQESETTQRAEKEVSR). A helical transmembrane segment spans residues 224–245 (MVVILVIGFLVCWLPYASVAWW). Residues 246-257 (IFCNQGSDFGPI) are Extracellular-facing. Residues 258 to 279 (FMTLPSFFAKRPAIYNPMIYIC) form a helical membrane-spanning segment. Residue lysine 267 is modified to N6-(retinylidene)lysine. Over 280-289 (MNKQFRHCMI) the chain is Cytoplasmic.

Belongs to the G-protein coupled receptor 1 family. Opsin subfamily. In terms of processing, phosphorylated on some or all of the serine and threonine residues present in the C-terminal region. Post-translationally, contains one covalently linked retinal chromophore.

It localises to the membrane. The protein resides in the cell projection. Its subcellular location is the cilium. The protein localises to the photoreceptor outer segment. In terms of biological role, photoreceptor required for image-forming vision at low light intensity. While most salt water fish species use retinal as chromophore, most freshwater fish use 3-dehydroretinal, or a mixture of retinal and 3-dehydroretinal. Light-induced isomerization of 11-cis to all-trans retinal triggers a conformational change that activates signaling via G-proteins. Subsequent receptor phosphorylation mediates displacement of the bound G-protein alpha subunit by arrestin and terminates signaling. The sequence is that of Rhodopsin (rho) from Batrachocottus multiradiatus (Baikal sculpin).